Consider the following 365-residue polypeptide: Chorismate synthase (365 aa).

A disordered region spans residues 41-61 (IQKELDRRRPGQSEVSTPRHE). NADP(+) is bound at residue arginine 48. Residues 125–127 (RSS), glycine 285, 300–304 (KPTPS), and arginine 327 contribute to the FMN site.

This sequence belongs to the chorismate synthase family. Requires FMNH2 as cofactor.

It catalyses the reaction 5-O-(1-carboxyvinyl)-3-phosphoshikimate = chorismate + phosphate. It functions in the pathway metabolic intermediate biosynthesis; chorismate biosynthesis; chorismate from D-erythrose 4-phosphate and phosphoenolpyruvate: step 7/7. Functionally, catalyzes the anti-1,4-elimination of the C-3 phosphate and the C-6 proR hydrogen from 5-enolpyruvylshikimate-3-phosphate (EPSP) to yield chorismate, which is the branch point compound that serves as the starting substrate for the three terminal pathways of aromatic amino acid biosynthesis. This reaction introduces a second double bond into the aromatic ring system. The sequence is that of Chorismate synthase from Methanosarcina barkeri (strain Fusaro / DSM 804).